The sequence spans 112 residues: Cell cycle protein GpsB (112 aa).

Residues tyrosine 42–arginine 77 are a coiled coil. Residues alanine 74 to valine 96 are disordered. Residues asparagine 81–asparagine 95 show a composition bias toward low complexity.

It belongs to the GpsB family. In terms of assembly, forms polymers through the coiled coil domains. Interacts with PBP1, MreC and EzrA.

It is found in the cytoplasm. Divisome component that associates with the complex late in its assembly, after the Z-ring is formed, and is dependent on DivIC and PBP2B for its recruitment to the divisome. Together with EzrA, is a key component of the system that regulates PBP1 localization during cell cycle progression. Its main role could be the removal of PBP1 from the cell pole after pole maturation is completed. Also contributes to the recruitment of PBP1 to the division complex. Not essential for septum formation. The polypeptide is Cell cycle protein GpsB (Staphylococcus epidermidis (strain ATCC 12228 / FDA PCI 1200)).